The primary structure comprises 253 residues: Testis-expressed protein 47 (253 aa).

This chain is Testis-expressed protein 47, found in Rattus norvegicus (Rat).